Here is a 308-residue protein sequence, read N- to C-terminus: Aspartate carbamoyltransferase catalytic subunit (308 aa).

Arg49 and Thr50 together coordinate carbamoyl phosphate. Lys77 is an L-aspartate binding site. Carbamoyl phosphate-binding residues include Arg99, His127, and Gln130. Positions 160 and 211 each coordinate L-aspartate. Carbamoyl phosphate is bound by residues Ala252 and Pro253.

Belongs to the aspartate/ornithine carbamoyltransferase superfamily. ATCase family. As to quaternary structure, heterododecamer (2C3:3R2) of six catalytic PyrB chains organized as two trimers (C3), and six regulatory PyrI chains organized as three dimers (R2).

It catalyses the reaction carbamoyl phosphate + L-aspartate = N-carbamoyl-L-aspartate + phosphate + H(+). The protein operates within pyrimidine metabolism; UMP biosynthesis via de novo pathway; (S)-dihydroorotate from bicarbonate: step 2/3. Its function is as follows. Catalyzes the condensation of carbamoyl phosphate and aspartate to form carbamoyl aspartate and inorganic phosphate, the committed step in the de novo pyrimidine nucleotide biosynthesis pathway. The protein is Aspartate carbamoyltransferase catalytic subunit of Geobacillus thermodenitrificans (strain NG80-2).